The sequence spans 153 residues: Prostaglandin E synthase (153 aa).

At 1 to 13 the chain is on the lumenal side; sequence MTSLGLVMENSQV. Residues 14–42 form a helical membrane-spanning segment; that stretch reads LPAFLLCSTLLVIKMYAVAVITGQVRLRK. Position 39 (arginine 39) interacts with glutathione. At 43 to 61 the chain is on the cytoplasmic side; sequence KAFANPEDALKRGGLQYCR. Residues 62–91 form a helical membrane-spanning segment; that stretch reads SDPDVERCLRAHRNDMETIYPFLFLGFVYS. 74–78 provides a ligand contact to glutathione; it reads RNDME. Residues 92–98 lie on the Lumenal side of the membrane; it reads FLGPNPL. Residues 99–120 traverse the membrane as a helical segment; the sequence is IAWIHFLVVLTGRVVHTVAYLG. Residues histidine 114 and tyrosine 118 each contribute to the glutathione site. The Cytoplasmic portion of the chain corresponds to 121–124; that stretch reads KMNP. A helical membrane pass occupies residues 125–153; the sequence is RIRSGAYVLAQFACFSMALQILWEVAHHL. A glutathione-binding site is contributed by 127–131; sequence RSGAY.

It belongs to the MAPEG family. The cofactor is glutathione.

The protein localises to the membrane. It is found in the cytoplasm. It localises to the perinuclear region. The catalysed reaction is prostaglandin H2 = prostaglandin E2. It catalyses the reaction 2-glyceryl-prostaglandin H2 = 2-glyceryl-prostaglandin E2. The enzyme catalyses prostaglandin G2 = (15S)-15-hydroperoxy-prostaglandin E2. It carries out the reaction 1-chloro-2,4-dinitrobenzene + glutathione = 2,4-dinitrophenyl-S-glutathione + chloride + H(+). The catalysed reaction is (5S)-hydroperoxy-(6E,8Z,11Z,14Z)-eicosatetraenoate + 2 glutathione = (5S)-hydroxy-(6E,8Z,11Z,14Z)-eicosatetraenoate + glutathione disulfide + H2O. It functions in the pathway lipid metabolism; prostaglandin biosynthesis. Its activity is regulated as follows. Activity is increased following LPS stimulation and down-regulated by the anti-inflammatory glucocorticoid dexamethasone. Terminal enzyme of the cyclooxygenase (COX)-2-mediated prostaglandin E2 (PGE2) biosynthetic pathway. Catalyzes the glutathione-dependent oxidoreduction of prostaglandin endoperoxide H2 (PGH2) to prostaglandin E2 (PGE2) in response to inflammatory stimuli. Plays a key role in inflammation response, fever and pain. Also catalyzes the oxidoreduction of endocannabinoids into prostaglandin glycerol esters and PGG2 into 15-hydroperoxy-PGE2. In addition, displays low glutathione transferase and glutathione-dependent peroxidase activities, toward 1-chloro-2,4-dinitrobenzene and 5-hydroperoxyicosatetraenoic acid (5-HPETE), respectively. The chain is Prostaglandin E synthase (Ptges) from Rattus norvegicus (Rat).